Reading from the N-terminus, the 507-residue chain is O-fucosyltransferase 30 (507 aa).

The helical; Signal-anchor for type II membrane protein transmembrane segment at 26-46 (AIFLCSVSILVVFFIVVFFIT) threads the bilayer. Residues Asn-110, Asn-146, Asn-398, and Asn-410 are each glycosylated (N-linked (GlcNAc...) asparagine).

This sequence belongs to the glycosyltransferase GT106 family.

Its subcellular location is the membrane. Its pathway is glycan metabolism. The chain is O-fucosyltransferase 30 from Arabidopsis thaliana (Mouse-ear cress).